The sequence spans 271 residues: MSWRPPVHDAPGIERNWYEACFRAHAGSCGCGNFIAHINLLAGRYGFTGGPPPPGGPPPGTPQVRASRNSPAAPQQPPALPWHGDGGEGGAAGPPGAGGDAAADAHLGDEELADLLDAIEDDAQCSNRRSKTRARRTDGPPTPIDTLEEYKWRTRNKWDPAGCSTPLTGEGAILARELSNACTRNLSTMKAILHNQKDLESFLQQRQQRESSESPKKAHIQRKKGRKPLQKSRRRRRQYSSSSDDSESSGSSSSSSNSSPEKCSKRKRVST.

Disordered regions lie at residues 49–103 (GGPP…DAAA), 124–146 (QCSNRRSKTRARRTDGPPTPIDT), and 203–271 (LQQR…RVST). Positions 50 to 61 (GPPPPGGPPPGT) are enriched in pro residues. Gly residues predominate over residues 87 to 99 (GEGGAAGPPGAGG). A compositionally biased stretch (basic and acidic residues) spans 207 to 216 (QQRESSESPK). Residues 217 to 238 (KAHIQRKKGRKPLQKSRRRRRQ) are compositionally biased toward basic residues. The span at 239–259 (YSSSSDDSESSGSSSSSSNSS) shows a compositional bias: low complexity.

In terms of processing, phosphorylated at C-terminal serines.

This Torque teno virus (isolate Human/Japan/SANBAN/1999) (TTV) protein is Probable protein VP2.